The primary structure comprises 511 residues: Arginine-containing cyclodipeptide synthase eshA (511 aa).

The Conserved DDXXE motif signature appears at D413–E417.

It belongs to the arginine-containing cyclodipeptide synthase family.

The catalysed reaction is L-arginyl-tRNA(Arg) + L-leucyl-tRNA(Leu) = cyclo(L-arginyl-L-leucyl) + tRNA(Arg) + tRNA(Leu) + 2 H(+). It functions in the pathway secondary metabolite biosynthesis. Arginine-containing cyclodipeptide synthase; part of the cluster that mediates the biosynthesis of a highly modified cyclo-arginine-leucine dipeptide (cRW). Within the pathway, eshA acts as the scaffold-generating enzyme and is responsible for formation of the cyclo-Arg-Leu diketopiperazine (cRL) from L-arginyl-tRNA(Arg) + L-Leucyl-tRNA(Leu). Additional enzymes from the cluster then further modify the cyclo-Arg-Leu diketopiperazine (cRW) scaffold. The polypeptide is Arginine-containing cyclodipeptide synthase eshA (Penicillium shearii (Eupenicillium shearii)).